The sequence spans 196 residues: Putative NADH dehydrogenase/NAD(P)H nitroreductase XCV0587 (196 aa).

It belongs to the nitroreductase family. HadB/RutE subfamily. FMN serves as cofactor.

The chain is Putative NADH dehydrogenase/NAD(P)H nitroreductase XCV0587 from Xanthomonas euvesicatoria pv. vesicatoria (strain 85-10) (Xanthomonas campestris pv. vesicatoria).